A 161-amino-acid chain; its full sequence is Phosphopantetheine adenylyltransferase (161 aa).

Thr-10 contacts substrate. Residues 10-11 (TF) and His-18 contribute to the ATP site. Substrate-binding residues include Lys-42, Leu-74, and Arg-88. ATP contacts are provided by residues 89–91 (GVR), Glu-99, and 123–129 (YIHISST).

This sequence belongs to the bacterial CoaD family. As to quaternary structure, homohexamer. Mg(2+) is required as a cofactor.

It localises to the cytoplasm. The catalysed reaction is (R)-4'-phosphopantetheine + ATP + H(+) = 3'-dephospho-CoA + diphosphate. It functions in the pathway cofactor biosynthesis; coenzyme A biosynthesis; CoA from (R)-pantothenate: step 4/5. Reversibly transfers an adenylyl group from ATP to 4'-phosphopantetheine, yielding dephospho-CoA (dPCoA) and pyrophosphate. The chain is Phosphopantetheine adenylyltransferase from Aquifex aeolicus (strain VF5).